We begin with the raw amino-acid sequence, 337 residues long: Anthranilate phosphoribosyltransferase (337 aa).

5-phospho-alpha-D-ribose 1-diphosphate-binding positions include Gly-80, Gly-83–Asp-84, Thr-88, Asn-90–Thr-93, Lys-108–Ser-116, and Ser-120. Position 80 (Gly-80) interacts with anthranilate. Ser-92 lines the Mg(2+) pocket. Asn-111 lines the anthranilate pocket. An anthranilate-binding site is contributed by Arg-166. Positions 224 and 225 each coordinate Mg(2+).

This sequence belongs to the anthranilate phosphoribosyltransferase family. As to quaternary structure, homodimer. It depends on Mg(2+) as a cofactor.

It carries out the reaction N-(5-phospho-beta-D-ribosyl)anthranilate + diphosphate = 5-phospho-alpha-D-ribose 1-diphosphate + anthranilate. It participates in amino-acid biosynthesis; L-tryptophan biosynthesis; L-tryptophan from chorismate: step 2/5. Its function is as follows. Catalyzes the transfer of the phosphoribosyl group of 5-phosphorylribose-1-pyrophosphate (PRPP) to anthranilate to yield N-(5'-phosphoribosyl)-anthranilate (PRA). This chain is Anthranilate phosphoribosyltransferase, found in Anaeromyxobacter sp. (strain Fw109-5).